The chain runs to 180 residues: Large ribosomal subunit protein uL6 (180 aa).

Belongs to the universal ribosomal protein uL6 family. Part of the 50S ribosomal subunit.

In terms of biological role, this protein binds to the 23S rRNA, and is important in its secondary structure. It is located near the subunit interface in the base of the L7/L12 stalk, and near the tRNA binding site of the peptidyltransferase center. In Clostridium botulinum (strain Eklund 17B / Type B), this protein is Large ribosomal subunit protein uL6.